A 330-amino-acid polypeptide reads, in one-letter code: Succinylglutamate desuccinylase (330 aa).

Residues His53, Glu56, and His147 each coordinate Zn(2+). Residue Glu210 is part of the active site.

Belongs to the AspA/AstE family. Succinylglutamate desuccinylase subfamily. Zn(2+) serves as cofactor.

It carries out the reaction N-succinyl-L-glutamate + H2O = L-glutamate + succinate. The protein operates within amino-acid degradation; L-arginine degradation via AST pathway; L-glutamate and succinate from L-arginine: step 5/5. Transforms N(2)-succinylglutamate into succinate and glutamate. The sequence is that of Succinylglutamate desuccinylase from Yersinia enterocolitica serotype O:8 / biotype 1B (strain NCTC 13174 / 8081).